Consider the following 142-residue polypeptide: Hemoglobin subunit alpha-A (142 aa).

Residues 2–142 enclose the Globin domain; the sequence is VLSAADKTNV…VGAVLTAKYR (141 aa). H59 serves as a coordination point for O2. Residue H88 participates in heme b binding.

This sequence belongs to the globin family. Heterotetramer of two alpha chains and two beta chains. In terms of tissue distribution, red blood cells.

Its function is as follows. Involved in oxygen transport from the lung to the various peripheral tissues. This chain is Hemoglobin subunit alpha-A (HBAA), found in Anas platyrhynchos platyrhynchos (Northern mallard).